The following is a 357-amino-acid chain: Guanine nucleotide-binding protein alpha-1 subunit (357 aa).

Glycine 2 carries the N-myristoyl glycine lipid modification. Residue cysteine 4 is the site of S-palmitoyl cysteine attachment. Residues 32–357 form the G-alpha domain; sequence NIIKLLLLGA…STKLKGCGLY (326 aa). A G1 motif region spans residues 35-48; sequence KLLLLGAGESGKST. Glutamate 43, serine 44, glycine 45, lysine 46, serine 47, threonine 48, aspartate 151, leucine 176, threonine 182, glycine 204, asparagine 270, lysine 271, aspartate 273, and alanine 329 together coordinate GTP. Serine 47 contributes to the Mg(2+) binding site. The segment at 174-182 is G2 motif; sequence DILHTRVPT. Mg(2+) is bound at residue threonine 182. Residues 197-206 form a G3 motif region; that stretch reads FRVFDVGGQR. Residues 266-273 form a G4 motif region; the sequence is ILFLNKID. The G5 motif stretch occupies residues 327–332; that stretch reads TCATDT.

The protein belongs to the G-alpha family. As to quaternary structure, g proteins are composed of 3 units; alpha, beta and gamma. The alpha chain contains the guanine nucleotide binding site. Mg(2+) is required as a cofactor.

Its function is as follows. Guanine nucleotide-binding proteins (G proteins) are involved as modulators or transducers in various transmembrane signaling systems. In Caenorhabditis elegans, this protein is Guanine nucleotide-binding protein alpha-1 subunit (gpa-1).